Reading from the N-terminus, the 168-residue chain is Nucleoside deoxyribosyltransferase (168 aa).

Glu103 acts as the Nucleophile in catalysis.

The protein belongs to the nucleoside deoxyribosyltransferase family.

It carries out the reaction 2-deoxy-D-ribosyl-base(1) + base(2) = 2-deoxy-D-ribosyl-base(2) + base(1).. The protein operates within nucleotide metabolism; nucleotide salvage pathway. Its function is as follows. Catalyzes the cleavage of the glycosidic bond of 2'-deoxyribonucleosides and the transfer of the deoxyribosyl moiety to an acceptor purine or pyrimidine base. In Limosilactobacillus fermentum (Lactobacillus fermentum), this protein is Nucleoside deoxyribosyltransferase (ntd).